The chain runs to 220 residues: Large ribosomal subunit protein eL15 (220 aa).

Residues 197-207 (KKRHEASRGAR) are compositionally biased toward basic and acidic residues. The tract at residues 197–220 (KKRHEASRGARDPWQIAEKLKEEK) is disordered.

The protein belongs to the eukaryotic ribosomal protein eL15 family.

This Desulfurococcus amylolyticus (strain DSM 18924 / JCM 16383 / VKM B-2413 / 1221n) (Desulfurococcus kamchatkensis) protein is Large ribosomal subunit protein eL15.